The chain runs to 168 residues: 2-C-methyl-D-erythritol 2,4-cyclodiphosphate synthase (168 aa).

The a divalent metal cation site is built by aspartate 13 and histidine 15. 4-CDP-2-C-methyl-D-erythritol 2-phosphate contacts are provided by residues 13 to 15 (DVH) and 39 to 40 (HS). Histidine 47 is an a divalent metal cation binding site. 4-CDP-2-C-methyl-D-erythritol 2-phosphate contacts are provided by residues 61–63 (DIG), 66–70 (FPDTD), phenylalanine 144, and lysine 147.

Belongs to the IspF family. In terms of assembly, homotrimer. The cofactor is a divalent metal cation.

It carries out the reaction 4-CDP-2-C-methyl-D-erythritol 2-phosphate = 2-C-methyl-D-erythritol 2,4-cyclic diphosphate + CMP. The protein operates within isoprenoid biosynthesis; isopentenyl diphosphate biosynthesis via DXP pathway; isopentenyl diphosphate from 1-deoxy-D-xylulose 5-phosphate: step 4/6. In terms of biological role, involved in the biosynthesis of isopentenyl diphosphate (IPP) and dimethylallyl diphosphate (DMAPP), two major building blocks of isoprenoid compounds. Catalyzes the conversion of 4-diphosphocytidyl-2-C-methyl-D-erythritol 2-phosphate (CDP-ME2P) to 2-C-methyl-D-erythritol 2,4-cyclodiphosphate (ME-CPP) with a corresponding release of cytidine 5-monophosphate (CMP). The protein is 2-C-methyl-D-erythritol 2,4-cyclodiphosphate synthase of Cupriavidus metallidurans (strain ATCC 43123 / DSM 2839 / NBRC 102507 / CH34) (Ralstonia metallidurans).